Reading from the N-terminus, the 443-residue chain is Tryptophan synthase beta chain (443 aa).

Residue Lys-110 is modified to N6-(pyridoxal phosphate)lysine.

It belongs to the TrpB family. As to quaternary structure, tetramer of two alpha and two beta chains. Pyridoxal 5'-phosphate is required as a cofactor.

The enzyme catalyses (1S,2R)-1-C-(indol-3-yl)glycerol 3-phosphate + L-serine = D-glyceraldehyde 3-phosphate + L-tryptophan + H2O. It functions in the pathway amino-acid biosynthesis; L-tryptophan biosynthesis; L-tryptophan from chorismate: step 5/5. Functionally, the beta subunit is responsible for the synthesis of L-tryptophan from indole and L-serine. In Thermococcus onnurineus (strain NA1), this protein is Tryptophan synthase beta chain.